The primary structure comprises 196 residues: Putative NADH dehydrogenase/NAD(P)H nitroreductase Smlt0482 (196 aa).

Belongs to the nitroreductase family. HadB/RutE subfamily. FMN serves as cofactor.

The protein is Putative NADH dehydrogenase/NAD(P)H nitroreductase Smlt0482 of Stenotrophomonas maltophilia (strain K279a).